Reading from the N-terminus, the 573-residue chain is Patellin-1 (573 aa).

Disordered regions lie at residues 1–74 (MAQE…SVKE) and 111–202 (REFT…DGTK). Ala2 bears the N-acetylalanine mark. Positions 18–28 (VKEKPITDKEV) are enriched in basic and acidic residues. Thr29 carries the post-translational modification Phosphothreonine. Residues 35 to 74 (AEKEEVAAPVSDEKAVPEKEVTPEKEAPAAEAEKSVSVKE) show a composition bias toward basic and acidic residues. Residues 89–157 (AEEVQKKALE…TTEVKVEEEK (69 aa)) adopt a coiled-coil conformation. A Phosphothreonine modification is found at Thr118. Basic and acidic residues-rich tracts occupy residues 120 to 169 (VKEE…EKSS) and 176 to 190 (TKSE…EVTT). A Phosphoserine modification is found at Ser195. A Glycyl lysine isopeptide (Lys-Gly) (interchain with G-Cter in ubiquitin) cross-link involves residue Lys285. A CRAL-TRIO domain is found at 295–468 (SGEEVSEFEK…KYGGLSKDTP (174 aa)). The region spanning 471–572 (EETITEAIVK…KKKVLYRFKT (102 aa)) is the GOLD domain.

Belongs to the patellin family. In terms of assembly, interacts with the deubiquitinating enzyme AMSH3. Expressed ubiquitously with higher levels in expanding roots and leaves (at protein level).

Its subcellular location is the membrane. The protein localises to the cytoplasm. Carrier protein that may be involved in membrane-trafficking events associated with cell plate formation during cytokinesis. Binds to some hydrophobic molecules and promotes their transfer between the different cellular sites. Binds to phosphoinositides with a preference for PtdIns(5)P, PtdIns(4,5)P2 and PtdIns(3)P. In Arabidopsis thaliana (Mouse-ear cress), this protein is Patellin-1 (PATL1).